Here is a 308-residue protein sequence, read N- to C-terminus: Homoserine kinase (308 aa).

An ATP-binding site is contributed by 95-105; it reads PQSRGLGSSAA.

It belongs to the GHMP kinase family. Homoserine kinase subfamily.

The protein localises to the cytoplasm. The catalysed reaction is L-homoserine + ATP = O-phospho-L-homoserine + ADP + H(+). It functions in the pathway amino-acid biosynthesis; L-threonine biosynthesis; L-threonine from L-aspartate: step 4/5. Its function is as follows. Catalyzes the ATP-dependent phosphorylation of L-homoserine to L-homoserine phosphate. This Corynebacterium diphtheriae (strain ATCC 700971 / NCTC 13129 / Biotype gravis) protein is Homoserine kinase.